The following is a 347-amino-acid chain: GMP reductase (347 aa).

108 to 131 (DDFTKTRQILAMSSALRFICVDVA) contributes to the NADP(+) binding site. 2 residues coordinate K(+): Gly181 and Gly183. Cys186 acts as the Thioimidate intermediate in catalysis. 216–239 (IVGDGGCTCPGDVAKAFGGGADFV) contacts NADP(+).

It belongs to the IMPDH/GMPR family. GuaC type 1 subfamily. As to quaternary structure, homotetramer.

It carries out the reaction IMP + NH4(+) + NADP(+) = GMP + NADPH + 2 H(+). In terms of biological role, catalyzes the irreversible NADPH-dependent deamination of GMP to IMP. It functions in the conversion of nucleobase, nucleoside and nucleotide derivatives of G to A nucleotides, and in maintaining the intracellular balance of A and G nucleotides. The chain is GMP reductase from Aeromonas hydrophila subsp. hydrophila (strain ATCC 7966 / DSM 30187 / BCRC 13018 / CCUG 14551 / JCM 1027 / KCTC 2358 / NCIMB 9240 / NCTC 8049).